The primary structure comprises 186 residues: Elongation factor P (186 aa).

It belongs to the elongation factor P family.

Its subcellular location is the cytoplasm. It functions in the pathway protein biosynthesis; polypeptide chain elongation. Its function is as follows. Involved in peptide bond synthesis. Stimulates efficient translation and peptide-bond synthesis on native or reconstituted 70S ribosomes in vitro. Probably functions indirectly by altering the affinity of the ribosome for aminoacyl-tRNA, thus increasing their reactivity as acceptors for peptidyl transferase. This chain is Elongation factor P, found in Prochlorococcus marinus (strain MIT 9303).